The sequence spans 278 residues: Myb/SANT-like DNA-binding domain-containing protein 1 (278 aa).

Residues 1–27 (MVRGAGPGPSLSALSHPTGASGMAAAE) are disordered. Residues 44–129 (RNWTDAEMRG…PDWPYYLAID (86 aa)) enclose the Myb-like domain. Residues 138-168 (SCDGKLPDSQPPGPSTSQTEASLSPPAKSTP) form a disordered region.

The chain is Myb/SANT-like DNA-binding domain-containing protein 1 (MSANTD1) from Homo sapiens (Human).